The chain runs to 122 residues: Large ribosomal subunit protein uL14 (122 aa).

This sequence belongs to the universal ribosomal protein uL14 family. Part of the 50S ribosomal subunit. Forms a cluster with proteins L3 and L19. In the 70S ribosome, L14 and L19 interact and together make contacts with the 16S rRNA in bridges B5 and B8.

Its function is as follows. Binds to 23S rRNA. Forms part of two intersubunit bridges in the 70S ribosome. This chain is Large ribosomal subunit protein uL14, found in Ectopseudomonas mendocina (strain ymp) (Pseudomonas mendocina).